A 506-amino-acid chain; its full sequence is GPI mannosyltransferase 3 (506 aa).

An N-linked (GlcNAc...) asparagine glycan is attached at Asn-115. Transmembrane regions (helical) follow at residues 180–200 (AFACFIRPTNILVWIFPLLFW), 229–249 (YGRLFGIFVLCVSLFLVNIIA), 257–277 (FVFPIISFFQFNVTSGLSSLY), 285–305 (YLSQALPLICGGFLPFVLLTM), 330–350 (FVYPISPILLTLAGKFFSSFS), and 358–378 (FFFLIGLGHALVITFLCRFHQ). Asn-395 carries an N-linked (GlcNAc...) asparagine glycan.

Belongs to the glycosyltransferase 22 family. PIGB subfamily.

Its subcellular location is the endoplasmic reticulum membrane. It functions in the pathway glycolipid biosynthesis; glycosylphosphatidylinositol-anchor biosynthesis. Its function is as follows. Mannosyltransferase involved in glycosylphosphatidylinositol-anchor biosynthesis. Transfers the third mannose to Man2-GlcN-acyl-PI during GPI precursor assembly. The chain is GPI mannosyltransferase 3 (gpi10) from Schizosaccharomyces pombe (strain 972 / ATCC 24843) (Fission yeast).